We begin with the raw amino-acid sequence, 365 residues long: uncharacterized protein (365 aa).

It belongs to the NAD(P)-dependent epimerase/dehydratase family.

The protein resides in the cytoplasm. It localises to the nucleus. This is an uncharacterized protein from Schizosaccharomyces pombe (strain 972 / ATCC 24843) (Fission yeast).